The sequence spans 143 residues: Transcription antitermination protein NusB (143 aa).

It belongs to the NusB family.

Its function is as follows. Involved in transcription antitermination. Required for transcription of ribosomal RNA (rRNA) genes. Binds specifically to the boxA antiterminator sequence of the ribosomal RNA (rrn) operons. The sequence is that of Transcription antitermination protein NusB from Desulfatibacillum aliphaticivorans.